A 308-amino-acid polypeptide reads, in one-letter code: Cytochrome b (308 aa).

The next 4 membrane-spanning stretches (helical) occupy residues 1–21 (FGSLLGICLVTQIITGLLLAT), 45–66 (WLIRNLHANGASFFFICIYLHI), 81–101 (WNTGVILLLTLMATAFVGYVL), and 146–166 (FFALHFLLPFVIAGITLVHLT). 2 residues coordinate heme b: histidine 51 and histidine 65. Histidine 150 and histidine 164 together coordinate heme b. Histidine 169 contributes to the a ubiquinone binding site. Transmembrane regions (helical) follow at residues 194 to 214 (MKDILGFALLFIALVAMALFS), 256 to 276 (LGGVLALAASVLVLFLIPLLH), and 288 to 308 (LSQILFWTLVANLLVLTWVGS).

The protein belongs to the cytochrome b family. As to quaternary structure, the cytochrome bc1 complex contains 11 subunits: 3 respiratory subunits (MT-CYB, CYC1 and UQCRFS1), 2 core proteins (UQCRC1 and UQCRC2) and 6 low-molecular weight proteins (UQCRH/QCR6, UQCRB/QCR7, UQCRQ/QCR8, UQCR10/QCR9, UQCR11/QCR10 and a cleavage product of UQCRFS1). This cytochrome bc1 complex then forms a dimer. The cofactor is heme b.

The protein localises to the mitochondrion inner membrane. Functionally, component of the ubiquinol-cytochrome c reductase complex (complex III or cytochrome b-c1 complex) that is part of the mitochondrial respiratory chain. The b-c1 complex mediates electron transfer from ubiquinol to cytochrome c. Contributes to the generation of a proton gradient across the mitochondrial membrane that is then used for ATP synthesis. The chain is Cytochrome b (MT-CYB) from Amblyornis macgregoriae (Macgregor's bowerbird).